The following is a 320-amino-acid chain: MQTRNTFSWIREEITRSISVSLMIYIITWASISSAYPIFAQQNYENPREATGRIVCANCHLANKPVDIEVPQTVLPDTVFEAVVKIPYDMQLKQVLANGKKGALNVGAVLILPEGFELAPPDRISPEMKEKIGNLSFQNYRPNKKNILVIGPVPGQKYSEITFPILAPDPASNKDVHFLKYPIYVGGNRGRGQIYPDGSKSNNTVYNATAGGIISKILRKEKGGYEITIVDASNGRQVIDIIPRGLELLVSEGESIKLDQPLTSNPNVGGFGQGDAEIVLQDPLRVQGLLFFLGSVVLAQIFLVLKKKQFEKVQLSEMNF.

Positions 1–35 (MQTRNTFSWIREEITRSISVSLMIYIITWASISSA) are cleaved as a signal peptide. Positions 36, 56, 59, and 60 each coordinate heme. Residues 286–306 (VQGLLFFLGSVVLAQIFLVLK) form a helical membrane-spanning segment.

This sequence belongs to the cytochrome f family. The 4 large subunits of the cytochrome b6-f complex are cytochrome b6, subunit IV (17 kDa polypeptide, petD), cytochrome f and the Rieske protein, while the 4 small subunits are PetG, PetL, PetM and PetN. The complex functions as a dimer. It depends on heme as a cofactor.

It localises to the plastid. It is found in the chloroplast thylakoid membrane. In terms of biological role, component of the cytochrome b6-f complex, which mediates electron transfer between photosystem II (PSII) and photosystem I (PSI), cyclic electron flow around PSI, and state transitions. This chain is Cytochrome f, found in Barbarea verna (Land cress).